A 246-amino-acid polypeptide reads, in one-letter code: rRNA methyltransferase 2, mitochondrial (246 aa).

A mitochondrion-targeting transit peptide spans 1 to 18; that stretch reads MAGYLKLVCVSFQRQGFH. S-adenosyl-L-methionine is bound by residues 83–86, Asp-112, 129–130, and Asp-154; these read PGAW and DV. The active-site Proton acceptor is the Lys-194.

The protein belongs to the class I-like SAM-binding methyltransferase superfamily. RNA methyltransferase RlmE family. In terms of tissue distribution, widely expressed, with highest expression in muscle, placenta, and heart.

It is found in the mitochondrion. The enzyme catalyses uridine(1369) in 16S rRNA + S-adenosyl-L-methionine = 2'-O-methyluridine(1369) in 16S rRNA + S-adenosyl-L-homocysteine + H(+). Functionally, S-adenosyl-L-methionine-dependent 2'-O-ribose methyltransferase that catalyzes the formation of 2'-O-methyluridine at position 1369 (Um1369) in the 16S mitochondrial large subunit ribosomal RNA (mtLSU rRNA), a universally conserved modification in the peptidyl transferase domain of the mtLSU rRNA. This activity may require prior 2'-O-methylguanosine modification at position 1370 (Gm1370) by MRM3. Essential for late-stage assembly of mtLSU required for efficient translation of mitochondrial DNA encoded proteins; methyltransferase activity is not required for this function. Essential for mitochondrial respiratory function. The sequence is that of rRNA methyltransferase 2, mitochondrial from Homo sapiens (Human).